We begin with the raw amino-acid sequence, 412 residues long: FAD-dependent monooxygenase nscC (412 aa).

An N-terminal signal peptide occupies residues 1 to 21 (MGKQQETILIIGAGISGLATS). Residues glutamate 35 and alanine 46 each contribute to the FAD site. Residue asparagine 92 is glycosylated (N-linked (GlcNAc...) asparagine). Arginine 119 contributes to the FAD binding site. Asparagine 170 and asparagine 231 each carry an N-linked (GlcNAc...) asparagine glycan. FAD is bound by residues aspartate 326 and glycine 339.

Belongs to the paxM FAD-dependent monooxygenase family. The cofactor is FAD.

It functions in the pathway secondary metabolite biosynthesis. Functionally, FAD-dependent monooxygenase; part of the gene cluster that mediates the biosynthesis of neosartoricin B, a prenylated anthracenone that probably exhibits T-cell antiproliferative activity, suggestive of a physiological role as an immunosuppressive agent. The non-reducing polyketide synthase nscA probably synthesizes and cyclizes the decaketide backbone. The hydrolase nscB then mediates the product release through hydrolysis followed by spontaneous decarboxylation. The prenyltransferase nscD catalyzes the addition of the dimethylallyl group to the aromatic C5. The FAD-dependent monooxygenase nscC is then responsible for the stereospecific hydroxylation at C2. Neosartoricin B can be converted into two additional compounds neosartoricins C and D. Neosartoricin C is a spirocyclic compound that is cyclized through the attack of C3 hydroxyl on C14, followed by dehydration. On the other hand, neosartoricin D is a further cyclized compound in which attack of C2 on C14 in neosartoricin C results in the formation of the acetal-containing dioxabicyclo-octanone ring. Both of these compounds are novel and possibly represent related metabolites of the gene cluster. In Trichophyton tonsurans (strain CBS 112818) (Scalp ringworm fungus), this protein is FAD-dependent monooxygenase nscC.